We begin with the raw amino-acid sequence, 226 residues long: Probable C4-dicarboxylate response regulator DctR (226 aa).

The 117-residue stretch at Lys7–Lys123 folds into the Response regulatory domain. Asp58 is modified (4-aspartylphosphate). Positions Ala179–Asp198 form a DNA-binding region, H-T-H motif.

Post-translationally, phosphorylated by DctS.

It is found in the cytoplasm. In terms of biological role, member of the two-component regulatory system DctS/DctR. Essential for expression of dctP. The chain is Probable C4-dicarboxylate response regulator DctR (dctR) from Bacillus subtilis (strain 168).